Reading from the N-terminus, the 314-residue chain is Serine/threonine-protein phosphatase SIT4 (314 aa).

Mn(2+) is bound by residues D53, H55, D85, and N117. H118 serves as the catalytic Proton donor. 2 residues coordinate Mn(2+): H167 and H241.

The protein belongs to the PPP phosphatase family. PP-6 (PP-V) subfamily. In terms of assembly, interacts with MDS3. Mn(2+) serves as cofactor.

Its subcellular location is the cytoplasm. The enzyme catalyses O-phospho-L-seryl-[protein] + H2O = L-seryl-[protein] + phosphate. It carries out the reaction O-phospho-L-threonyl-[protein] + H2O = L-threonyl-[protein] + phosphate. In terms of biological role, serine/threonine protein phosphatase which is involved in the dephosphorylation of the large subunit of RNA polymerase II. Is required in late G1 for normal G1 cyclin expression, bud initiation and expression of certain genes that are periodically expressed during late G1. Plays a role during hyphal growth through the regulation of cell wall biogenesis, osmosensing and protein translation. Involved in virulence in a mouse systemic infection model. The polypeptide is Serine/threonine-protein phosphatase SIT4 (SIT4) (Candida albicans (strain SC5314 / ATCC MYA-2876) (Yeast)).